The chain runs to 198 residues: Peroxynitrite isomerase (198 aa).

Residues 20–26 (GVWEGTG) carry the GXWXGXG motif. Position 189 (histidine 189) interacts with heme b.

Belongs to the nitrobindin family. As to quaternary structure, homodimer. The cofactor is heme b.

The enzyme catalyses peroxynitrite = nitrate. It participates in nitrogen metabolism. Its function is as follows. Heme-binding protein able to scavenge peroxynitrite and to protect free L-tyrosine against peroxynitrite-mediated nitration, by acting as a peroxynitrite isomerase that converts peroxynitrite to nitrate. Therefore, this protein likely plays a role in peroxynitrite sensing and in the detoxification of reactive nitrogen and oxygen species (RNS and ROS, respectively). Is able to bind nitric oxide (NO) in vitro, but may act as a sensor of peroxynitrite levels in vivo. In Leifsonia xyli subsp. xyli (strain CTCB07), this protein is Peroxynitrite isomerase.